The following is a 266-amino-acid chain: Non-structural maintenance of chromosomes element 1 homolog (266 aa).

Positions 1-102 are interaction with NSMCE3; sequence MQGSTRRMSV…SISKMATDFA (102 aa). Residues 191–232 form an RING-type; atypical zinc finger; the sequence is CNICHSLLIQGQSCETCGIRMHLPCVAKYFQSNAEPRCPHCN. A disordered region spans residues 245–266; it reads PEKERESGVSKSNKKSLRSRQH. S251 is modified (phosphoserine). Over residues 256 to 266 the composition is skewed to basic residues; sequence SNKKSLRSRQH.

It belongs to the NSE1 family. As to quaternary structure, component of the SMC5-SMC6 complex which consists at least of SMC5, SMC6, NSMCE2, NSMCE1, NSMCE4A or EID3 and NSMCE3. NSMCE1, NSMCE4A or EID3 and NSMCE3 probably form a subcomplex that bridges the head domains of the SMC5-SMC6 heterodimer. Interacts with NSMCE3. Post-translationally, ubiquitinated.

The protein resides in the nucleus. It is found in the chromosome. It localises to the telomere. The catalysed reaction is S-ubiquitinyl-[E2 ubiquitin-conjugating enzyme]-L-cysteine + [acceptor protein]-L-lysine = [E2 ubiquitin-conjugating enzyme]-L-cysteine + N(6)-ubiquitinyl-[acceptor protein]-L-lysine.. Functionally, RING-type zinc finger-containing E3 ubiquitin ligase that assembles with melanoma antigen protein (MAGE) to catalyze the direct transfer of ubiquitin from E2 ubiquitin-conjugating enzyme to a specific substrate. Within MAGE-RING ubiquitin ligase complex, MAGE stimulates and specifies ubiquitin ligase activity likely through recruitment and/or stabilization of the E2 ubiquitin-conjugating enzyme at the E3:substrate complex. Involved in maintenance of genome integrity, DNA damage response and DNA repair. NSMCE3/MAGEG1 and NSMCE1 ubiquitin ligase are components of SMC5-SMC6 complex and may positively regulate homologous recombination-mediated DNA repair. The chain is Non-structural maintenance of chromosomes element 1 homolog (NSMCE1) from Pongo abelii (Sumatran orangutan).